The sequence spans 128 residues: Fluoride-specific ion channel FluC (128 aa).

Transmembrane regions (helical) follow at residues Leu2–Leu22, Trp37–Ile57, Ala65–Phe85, and Ala101–Ala121. Na(+)-binding residues include Gly77 and Thr80.

It belongs to the fluoride channel Fluc/FEX (TC 1.A.43) family.

The protein resides in the cell inner membrane. It catalyses the reaction fluoride(in) = fluoride(out). Na(+) is not transported, but it plays an essential structural role and its presence is essential for fluoride channel function. In terms of biological role, fluoride-specific ion channel. Important for reducing fluoride concentration in the cell, thus reducing its toxicity. The protein is Fluoride-specific ion channel FluC of Bordetella bronchiseptica (strain ATCC BAA-588 / NCTC 13252 / RB50) (Alcaligenes bronchisepticus).